A 415-amino-acid polypeptide reads, in one-letter code: Mitochondrial distribution and morphology protein 12 (415 aa).

The 402-residue stretch at 1-402 (MSFDINWSEL…WPSWVCFDLN (402 aa)) folds into the SMP-LTD domain. The tract at residues 53-146 (EITIRHIGDP…PPLTDLRRSR (94 aa)) is disordered. Composition is skewed to acidic residues over residues 62–75 (PFDDFYEDEGDDDE) and 92–103 (NSSDDDEDDEYD).

Belongs to the MDM12 family. As to quaternary structure, component of the ER-mitochondria encounter structure (ERMES) or MDM complex, composed of MMM1, MDM10, MDM12 and MDM34. An MMM1 homodimer associates with one molecule of MDM12 on each side in a pairwise head-to-tail manner, and the SMP-LTD domains of MMM1 and MDM12 generate a continuous hydrophobic tunnel for phospholipid trafficking.

It is found in the mitochondrion outer membrane. Its subcellular location is the endoplasmic reticulum membrane. In terms of biological role, component of the ERMES/MDM complex, which serves as a molecular tether to connect the endoplasmic reticulum (ER) and mitochondria. Components of this complex are involved in the control of mitochondrial shape and protein biogenesis, and function in nonvesicular lipid trafficking between the ER and mitochondria. MDM12 is required for the interaction of the ER-resident membrane protein MMM1 and the outer mitochondrial membrane-resident beta-barrel protein MDM10. The MDM12-MMM1 subcomplex functions in the major beta-barrel assembly pathway that is responsible for biogenesis of all mitochondrial outer membrane beta-barrel proteins, and acts in a late step after the SAM complex. The MDM10-MDM12-MMM1 subcomplex further acts in the TOM40-specific pathway after the action of the MDM12-MMM1 complex. Essential for establishing and maintaining the structure of mitochondria and maintenance of mtDNA nucleoids. This chain is Mitochondrial distribution and morphology protein 12, found in Debaryomyces hansenii (strain ATCC 36239 / CBS 767 / BCRC 21394 / JCM 1990 / NBRC 0083 / IGC 2968) (Yeast).